The primary structure comprises 375 residues: 1-deoxy-D-xylulose 5-phosphate reductoisomerase (375 aa).

T10, G11, S12, V13, K37, and N114 together coordinate NADPH. K115 provides a ligand contact to 1-deoxy-D-xylulose 5-phosphate. E116 is an NADPH binding site. Residue D136 coordinates Mn(2+). 1-deoxy-D-xylulose 5-phosphate is bound by residues S137, E138, S162, and H185. E138 contacts Mn(2+). G191 is an NADPH binding site. Residues S198, N203, K204, and E207 each contribute to the 1-deoxy-D-xylulose 5-phosphate site. E207 contacts Mn(2+).

The protein belongs to the DXR family. It depends on Mg(2+) as a cofactor. The cofactor is Mn(2+).

It carries out the reaction 2-C-methyl-D-erythritol 4-phosphate + NADP(+) = 1-deoxy-D-xylulose 5-phosphate + NADPH + H(+). The protein operates within isoprenoid biosynthesis; isopentenyl diphosphate biosynthesis via DXP pathway; isopentenyl diphosphate from 1-deoxy-D-xylulose 5-phosphate: step 1/6. In terms of biological role, catalyzes the NADPH-dependent rearrangement and reduction of 1-deoxy-D-xylulose-5-phosphate (DXP) to 2-C-methyl-D-erythritol 4-phosphate (MEP). The polypeptide is 1-deoxy-D-xylulose 5-phosphate reductoisomerase (Sulfurihydrogenibium sp. (strain YO3AOP1)).